A 261-amino-acid chain; its full sequence is Cytochrome c oxidase subunit 3 (261 aa).

The Mitochondrial matrix portion of the chain corresponds to 1–15; sequence MAHQAHAYHMVDPSP. Residues 16 to 34 form a helical membrane-spanning segment; that stretch reads WPLTGAVAALLLTSGLAIW. The Mitochondrial intermembrane portion of the chain corresponds to 35–40; sequence FPFNSL. A helical transmembrane segment spans residues 41-66; sequence ILLTLGLVLLLLTMYQWWRDIVREGT. The Mitochondrial matrix segment spans residues 67 to 72; sequence FQGHHT. The helical transmembrane segment at 73–105 threads the bilayer; sequence PPVQKGLRYGMILFITSEVFFFLGFFWAFYHSS. Residues 106 to 128 lie on the Mitochondrial intermembrane side of the membrane; that stretch reads LAPTPELGGCWPPTGIVPLNPFE. Residues 129–152 traverse the membrane as a helical segment; that stretch reads VPLLNTAVLLASGVTVTWAHHSIM. Over 153 to 155 the chain is Mitochondrial matrix; sequence EGE. Residues 156–183 form a helical membrane-spanning segment; the sequence is RKQAIHSLTLTILLGFYFTFLQAMEYYE. Topologically, residues 184–190 are mitochondrial intermembrane; it reads APFTIAD. A helical membrane pass occupies residues 191–223; sequence GVYGSTFFVATGFHGLHVIIGSTFLAICLLRQI. The Mitochondrial matrix segment spans residues 224 to 232; the sequence is RYHFTSEHH. A helical transmembrane segment spans residues 233-256; the sequence is FGFEAAAWYWHFVDVVWLFLYISI. Topologically, residues 257 to 261 are mitochondrial intermembrane; sequence YWWGS.

It belongs to the cytochrome c oxidase subunit 3 family. As to quaternary structure, component of the cytochrome c oxidase (complex IV, CIV), a multisubunit enzyme composed of 14 subunits. The complex is composed of a catalytic core of 3 subunits MT-CO1, MT-CO2 and MT-CO3, encoded in the mitochondrial DNA, and 11 supernumerary subunits COX4I, COX5A, COX5B, COX6A, COX6B, COX6C, COX7A, COX7B, COX7C, COX8 and NDUFA4, which are encoded in the nuclear genome. The complex exists as a monomer or a dimer and forms supercomplexes (SCs) in the inner mitochondrial membrane with NADH-ubiquinone oxidoreductase (complex I, CI) and ubiquinol-cytochrome c oxidoreductase (cytochrome b-c1 complex, complex III, CIII), resulting in different assemblies (supercomplex SCI(1)III(2)IV(1) and megacomplex MCI(2)III(2)IV(2)).

The protein localises to the mitochondrion inner membrane. It catalyses the reaction 4 Fe(II)-[cytochrome c] + O2 + 8 H(+)(in) = 4 Fe(III)-[cytochrome c] + 2 H2O + 4 H(+)(out). Its function is as follows. Component of the cytochrome c oxidase, the last enzyme in the mitochondrial electron transport chain which drives oxidative phosphorylation. The respiratory chain contains 3 multisubunit complexes succinate dehydrogenase (complex II, CII), ubiquinol-cytochrome c oxidoreductase (cytochrome b-c1 complex, complex III, CIII) and cytochrome c oxidase (complex IV, CIV), that cooperate to transfer electrons derived from NADH and succinate to molecular oxygen, creating an electrochemical gradient over the inner membrane that drives transmembrane transport and the ATP synthase. Cytochrome c oxidase is the component of the respiratory chain that catalyzes the reduction of oxygen to water. Electrons originating from reduced cytochrome c in the intermembrane space (IMS) are transferred via the dinuclear copper A center (CU(A)) of subunit 2 and heme A of subunit 1 to the active site in subunit 1, a binuclear center (BNC) formed by heme A3 and copper B (CU(B)). The BNC reduces molecular oxygen to 2 water molecules using 4 electrons from cytochrome c in the IMS and 4 protons from the mitochondrial matrix. The protein is Cytochrome c oxidase subunit 3 (mt-co3) of Tetraodon nigroviridis (Spotted green pufferfish).